The chain runs to 475 residues: Amino acid permease 8 (475 aa).

The segment at 1–22 (MDAYNNPSAVESGDAAVKSVDD) is disordered. Over 1-31 (MDAYNNPSAVESGDAAVKSVDDDGREKRTGT) the chain is Cytoplasmic. Helical transmembrane passes span 32–52 (FWTASAHIITAVIGSGVLSLA) and 53–73 (WAIAQLGWVAGTTVLVAFAII). The Cytoplasmic portion of the chain corresponds to 74–120 (TYYTSTLLADCYRSPDSITGTRNYNYMGVVRSYLGGKKVQLCGVAQY). Residues 121-141 (VNLVGVTIGYTITASISLVAI) traverse the membrane as a helical segment. The Extracellular portion of the chain corresponds to 142–157 (GKSNCYHDKGHKAKCS). The helical transmembrane segment at 158–178 (VSNYPYMAAFGIVQIILSQLP) threads the bilayer. The Cytoplasmic segment spans residues 179 to 185 (NFHKLSF). Residues 186–206 (LSIIAAVMSFSYASIGIGLAI) traverse the membrane as a helical segment. Residues 207 to 236 (ATVASGKIGKTELTGTVIGVDVTASEKVWK) are Extracellular-facing. The helical transmembrane segment at 237 to 257 (LFQAIGDIAFSYAFTTILIEI) threads the bilayer. The Cytoplasmic portion of the chain corresponds to 258–276 (QDTLRSSPPENKVMKRASL). Residues 277-297 (VGVSTTTVFYILCGCIGYAAF) traverse the membrane as a helical segment. Residues 298-314 (GNQAPGDFLTDFGFYEP) are Extracellular-facing. The chain crosses the membrane as a helical span at residues 315-335 (YWLIDFANACIALHLIGAYQV). Residues 336-378 (YAQPFFQFVEENCNKKWPQSNFINKEYSSKVPLLGKCRVNLFR) are Cytoplasmic-facing. A helical membrane pass occupies residues 379–398 (LVWRTCYVVLTTFVAMIFPF). Residues 399-401 (FNA) lie on the Extracellular side of the membrane. Residues 402 to 424 (ILGLLGAFAFWPLTVYFPVAMHI) form a helical membrane-spanning segment. Residues 425-441 (AQAKVKKYSRRWLALNL) are Cytoplasmic-facing. Residues 442–462 (LVLVCLIVSALAAVGSIIGLI) form a helical membrane-spanning segment. Over 463-475 (NSVKSYKPFKNLD) the chain is Extracellular.

This sequence belongs to the amino acid/polyamine transporter 2 family. Amino acid/auxin permease (AAAP) (TC 2.A.18.2) subfamily. In terms of tissue distribution, expressed in flower buds, siliques, developing seeds and funiculi.

Its subcellular location is the cell membrane. Its function is as follows. Amino acid-proton symporter. Stereospecific transporter with a broad specificity for glutamate, aspartate and neutral and acidic amino acids. The protein is Amino acid permease 8 (AAP8) of Arabidopsis thaliana (Mouse-ear cress).